Consider the following 114-residue polypeptide: Ribonuclease P protein component (114 aa).

It belongs to the RnpA family. In terms of assembly, consists of a catalytic RNA component (M1 or rnpB) and a protein subunit.

It carries out the reaction Endonucleolytic cleavage of RNA, removing 5'-extranucleotides from tRNA precursor.. In terms of biological role, RNaseP catalyzes the removal of the 5'-leader sequence from pre-tRNA to produce the mature 5'-terminus. It can also cleave other RNA substrates such as 4.5S RNA. The protein component plays an auxiliary but essential role in vivo by binding to the 5'-leader sequence and broadening the substrate specificity of the ribozyme. The protein is Ribonuclease P protein component of Buchnera aphidicola subsp. Baizongia pistaciae (strain Bp).